The primary structure comprises 240 residues: MSLVSGARDMGFDDNNNNKNNKDGDDENSSSRTRADDDALSRQMSESSLCATEEEEDDDSKLQLGPQYTIKEHLEKDKDDESLRKWKEQLLGSVDVTNIGETLDPEVRIDSLAIISPGRPDIVLLVPENGNPKGMWFTLKEGSKYNLKFTFHVNNNIVSGLRYTNTVWKTGVKVDRAKEMLGTFSPQLEPYNHVMPEETTPSGMFARGSYSARTKFLDDDNKCYLEINYSFDIRKEWPAL.

The disordered stretch occupies residues 1-66 (MSLVSGARDM…DDDSKLQLGP (66 aa)).

This sequence belongs to the Rho GDI family. As to quaternary structure, interacts with RAC-like GTP binding proteins ARAC5/ROP4 and ARAC3/ROP6.

The protein localises to the cytoplasm. Functionally, regulates the GDP/GTP exchange reaction of the Rho proteins by inhibiting the dissociation of GDP from them, and the subsequent binding of GTP to them. The protein is Rho GDP-dissociation inhibitor 1 (GDI1) of Arabidopsis thaliana (Mouse-ear cress).